Here is a 504-residue protein sequence, read N- to C-terminus: Glycerol kinase (504 aa).

Thr-12 provides a ligand contact to ADP. ATP contacts are provided by Thr-12, Thr-13, and Ser-14. Thr-12 serves as a coordination point for sn-glycerol 3-phosphate. Arg-16 is an ADP binding site. Sn-glycerol 3-phosphate contacts are provided by Arg-82, Glu-83, Tyr-134, and Asp-246. Glycerol contacts are provided by Arg-82, Glu-83, Tyr-134, Asp-246, and Gln-247. ADP-binding residues include Thr-268 and Gly-312. ATP-binding residues include Thr-268, Gly-312, Gln-316, and Gly-413. The ADP site is built by Gly-413 and Asn-417.

Belongs to the FGGY kinase family.

The catalysed reaction is glycerol + ATP = sn-glycerol 3-phosphate + ADP + H(+). It participates in polyol metabolism; glycerol degradation via glycerol kinase pathway; sn-glycerol 3-phosphate from glycerol: step 1/1. Inhibited by fructose 1,6-bisphosphate (FBP). Key enzyme in the regulation of glycerol uptake and metabolism. Catalyzes the phosphorylation of glycerol to yield sn-glycerol 3-phosphate. The polypeptide is Glycerol kinase (Renibacterium salmoninarum (strain ATCC 33209 / DSM 20767 / JCM 11484 / NBRC 15589 / NCIMB 2235)).